A 226-amino-acid polypeptide reads, in one-letter code: 7-cyano-7-deazaguanine synthase (226 aa).

8 to 18 (ISGGLDSTTCL) is a binding site for ATP. Positions 188, 198, 201, and 204 each coordinate Zn(2+).

It belongs to the QueC family. It depends on Zn(2+) as a cofactor.

It catalyses the reaction 7-carboxy-7-deazaguanine + NH4(+) + ATP = 7-cyano-7-deazaguanine + ADP + phosphate + H2O + H(+). It participates in purine metabolism; 7-cyano-7-deazaguanine biosynthesis. Catalyzes the ATP-dependent conversion of 7-carboxy-7-deazaguanine (CDG) to 7-cyano-7-deazaguanine (preQ(0)). The sequence is that of 7-cyano-7-deazaguanine synthase from Coxiella burnetii (strain RSA 331 / Henzerling II).